We begin with the raw amino-acid sequence, 426 residues long: Methionine aminopeptidase 2 (426 aa).

A disordered region spans residues 1–72 (MTSATTTEAT…QEQTNPPTVG (72 aa)). Residues 10–34 (TAKDLQEKLSLKENDVVEDDGKVEE) show a composition bias toward basic and acidic residues. A compositionally biased stretch (basic residues) spans 47-60 (KKKKKKKKSSKKKK). H179 contacts substrate. 3 residues coordinate a divalent metal cation: D199, D210, and H279. H287 is a binding site for substrate. Residues E312 and E407 each contribute to the a divalent metal cation site.

It belongs to the peptidase M24A family. Methionine aminopeptidase eukaryotic type 2 subfamily. Co(2+) serves as cofactor. Requires Zn(2+) as cofactor. Mn(2+) is required as a cofactor. It depends on Fe(2+) as a cofactor.

The protein localises to the cytoplasm. The enzyme catalyses Release of N-terminal amino acids, preferentially methionine, from peptides and arylamides.. In terms of biological role, cotranslationally removes the N-terminal methionine from nascent proteins. The N-terminal methionine is often cleaved when the second residue in the primary sequence is small and uncharged (Met-Ala-, Cys, Gly, Pro, Ser, Thr, or Val). The chain is Methionine aminopeptidase 2 (fma2) from Schizosaccharomyces pombe (strain 972 / ATCC 24843) (Fission yeast).